We begin with the raw amino-acid sequence, 482 residues long: Proline--tRNA ligase (482 aa).

The protein belongs to the class-II aminoacyl-tRNA synthetase family. ProS type 3 subfamily. Homodimer.

Its subcellular location is the cytoplasm. It catalyses the reaction tRNA(Pro) + L-proline + ATP = L-prolyl-tRNA(Pro) + AMP + diphosphate. Catalyzes the attachment of proline to tRNA(Pro) in a two-step reaction: proline is first activated by ATP to form Pro-AMP and then transferred to the acceptor end of tRNA(Pro). This Mycoplasmopsis synoviae (strain 53) (Mycoplasma synoviae) protein is Proline--tRNA ligase.